Reading from the N-terminus, the 387-residue chain is uncharacterized protein (387 aa).

The protein localises to the virion. This is an uncharacterized protein from Acanthamoeba polyphaga (Amoeba).